The chain runs to 682 residues: Methionine--tRNA ligase (682 aa).

The 'HIGH' region signature appears at 15–25 (PYANGAIHLGH). The Zn(2+) site is built by Cys-146, Cys-149, Cys-159, and Cys-162. The 'KMSKS' region signature appears at 331–335 (KMSKS). Lys-334 is a binding site for ATP. A tRNA-binding domain is found at 580–682 (DFAKLDMRVA…SGVTAGMQVK (103 aa)).

The protein belongs to the class-I aminoacyl-tRNA synthetase family. MetG type 1 subfamily. Homodimer. Zn(2+) serves as cofactor.

The protein localises to the cytoplasm. The catalysed reaction is tRNA(Met) + L-methionine + ATP = L-methionyl-tRNA(Met) + AMP + diphosphate. In terms of biological role, is required not only for elongation of protein synthesis but also for the initiation of all mRNA translation through initiator tRNA(fMet) aminoacylation. This Haemophilus influenzae (strain PittEE) protein is Methionine--tRNA ligase.